The following is a 257-amino-acid chain: Homeobox protein goosecoid (257 aa).

A DNA-binding region (homeobox) is located at residues 160-219 (KRRHRTIFTDEQLEALENLFQETKYPDVGTREQLARKVHLREEKVEVWFKNRRAKWRRQK). Positions 213–257 (AKWRRQKRSSSEESENAEKWNKTSSSKASPEKREEEGKSDLDSDS) are disordered. A compositionally biased stretch (basic and acidic residues) spans 241–257 (SPEKREEEGKSDLDSDS).

Belongs to the paired homeobox family. Bicoid subfamily.

It is found in the nucleus. Regulates chordin (CHRD). May play a role in spatial programing within discrete embryonic fields or lineage compartments during organogenesis. In concert with NKX3-2, plays a role in defining the structural components of the middle ear; required for the development of the entire tympanic ring. Probably involved in the regulatory networks that define neural crest cell fate specification and determine mesoderm cell lineages in mammals. In Gorilla gorilla gorilla (Western lowland gorilla), this protein is Homeobox protein goosecoid (GSC).